A 178-amino-acid polypeptide reads, in one-letter code: Large ribosomal subunit protein bL17 (178 aa).

The span at 126 to 139 (DRARRVAASKKAEE) shows a compositional bias: basic and acidic residues. The tract at residues 126–178 (DRARRVAASKKAEEQAPAAEAEEQAPAAEAEAPAADAAAEAKADEAAEDKKDA) is disordered. Residues 140–163 (QAPAAEAEEQAPAAEAEAPAADAA) are compositionally biased toward low complexity. Positions 164 to 178 (AEAKADEAAEDKKDA) are enriched in basic and acidic residues.

It belongs to the bacterial ribosomal protein bL17 family. Part of the 50S ribosomal subunit. Contacts protein L32.

This chain is Large ribosomal subunit protein bL17, found in Nocardia farcinica (strain IFM 10152).